Here is a 309-residue protein sequence, read N- to C-terminus: Short chain dehydrogenase MYCFIDRAFT_6125 (309 aa).

NADP(+) contacts are provided by I43, R67, D88, and R150. Residue S168 is the Proton donor of the active site. Residues Y182, K186, V215, and S217 each coordinate NADP(+). Y182 serves as the catalytic Proton acceptor. The active-site Lowers pKa of active site Tyr is K186.

This sequence belongs to the short-chain dehydrogenases/reductases (SDR) family.

Its pathway is secondary metabolite biosynthesis. Its function is as follows. Short chain dehydrogenase; part of the gene cluster that mediates the biosynthesis of an emodin derivative that may be involved in black Sigatoka disease of banana. The pathway begins with the synthesis of atrochrysone thioester by the polyketide synthase PKS8-1. The atrochrysone carboxyl ACP thioesterase MYCFIDRAFT_190111 then breaks the thioester bond and releases the atrochrysone carboxylic acid from PKS8-1. The decarboxylase MYCFIDRAFT_34057 then catalyzes the concerted decarboxylation-elimination required to convert atochrysone carboxylic acid into emodin anthrone, which is further oxidized to emodin by the anthrone oxygenase MYCFIDRAFT_34418. The functions of the other tailoring enzymes as well as the final product of the cluster have still to be identified. The polypeptide is Short chain dehydrogenase MYCFIDRAFT_6125 (Pseudocercospora fijiensis (strain CIRAD86) (Black leaf streak disease fungus)).